Consider the following 207-residue polypeptide: LexA repressor (207 aa).

Positions 28 to 48 (RAEIASRLGFKSANAAEEHLK) form a DNA-binding region, H-T-H motif. Active-site for autocatalytic cleavage activity residues include S124 and K161.

Belongs to the peptidase S24 family. In terms of assembly, homodimer.

It carries out the reaction Hydrolysis of Ala-|-Gly bond in repressor LexA.. Functionally, represses a number of genes involved in the response to DNA damage (SOS response), including recA and lexA. In the presence of single-stranded DNA, RecA interacts with LexA causing an autocatalytic cleavage which disrupts the DNA-binding part of LexA, leading to derepression of the SOS regulon and eventually DNA repair. This chain is LexA repressor, found in Shewanella amazonensis (strain ATCC BAA-1098 / SB2B).